We begin with the raw amino-acid sequence, 406 residues long: NAC transcription factor NAM-1 (406 aa).

Polar residues predominate over residues 1–11 (MGSPDSSSGSA). Positions 1–40 (MGSPDSSSGSAQKPPRHQHQHQPPPPRRQGSAPELPPGFR) are disordered. The 170-residue stretch at 35–204 (LPPGFRFHPT…DWVLCRIYKK (170 aa)) folds into the NAC domain. Residues 137–210 (VGVKKALVFY…IYKKTSKAAA (74 aa)) mediate DNA binding.

The protein localises to the nucleus. Functionally, transcription factor of the NAC family associated with the grain protein content (GPC). Accelerates senescence and increases nutrient remobilization from leaves to developing grains. Sequences of 11 European varieties of H.vulgare tested belongs to the same haplotype while the sequence found in H.spontaneum, an ancestor of the cultivated H.vulgare which has a higher GPC, belongs to an other haplotype. This Hordeum vulgare subsp. vulgare (Domesticated barley) protein is NAC transcription factor NAM-1 (NAM-1).